A 278-amino-acid polypeptide reads, in one-letter code: NAD kinase (278 aa).

Catalysis depends on D56, which acts as the Proton acceptor. Residues 56–57, 132–133, R158, D160, and 171–176 contribute to the NAD(+) site; these read DG, NE, and TAYNKS.

It belongs to the NAD kinase family. A divalent metal cation is required as a cofactor.

Its subcellular location is the cytoplasm. The catalysed reaction is NAD(+) + ATP = ADP + NADP(+) + H(+). Its function is as follows. Involved in the regulation of the intracellular balance of NAD and NADP, and is a key enzyme in the biosynthesis of NADP. Catalyzes specifically the phosphorylation on 2'-hydroxyl of the adenosine moiety of NAD to yield NADP. This is NAD kinase from Streptococcus pyogenes serotype M1.